The chain runs to 84 residues: SPbeta prophage-derived uncharacterized protein YomY (84 aa).

This Bacillus subtilis (strain 168) protein is SPbeta prophage-derived uncharacterized protein YomY (yomY).